The sequence spans 279 residues: Putative pyruvate, phosphate dikinase regulatory protein (279 aa).

Position 153-160 (153-160 (GVSRTSKT)) interacts with ADP.

This sequence belongs to the pyruvate, phosphate/water dikinase regulatory protein family. PDRP subfamily.

It catalyses the reaction N(tele)-phospho-L-histidyl/L-threonyl-[pyruvate, phosphate dikinase] + ADP = N(tele)-phospho-L-histidyl/O-phospho-L-threonyl-[pyruvate, phosphate dikinase] + AMP + H(+). It carries out the reaction N(tele)-phospho-L-histidyl/O-phospho-L-threonyl-[pyruvate, phosphate dikinase] + phosphate + H(+) = N(tele)-phospho-L-histidyl/L-threonyl-[pyruvate, phosphate dikinase] + diphosphate. In terms of biological role, bifunctional serine/threonine kinase and phosphorylase involved in the regulation of the pyruvate, phosphate dikinase (PPDK) by catalyzing its phosphorylation/dephosphorylation. The polypeptide is Putative pyruvate, phosphate dikinase regulatory protein (Rhodopseudomonas palustris (strain BisA53)).